A 338-amino-acid chain; its full sequence is Anthranilate phosphoribosyltransferase (338 aa).

5-phospho-alpha-D-ribose 1-diphosphate contacts are provided by residues Gly81, 84 to 85 (GD), Ser89, 91 to 94 (NVST), 109 to 117 (KHGNRALSS), and Ala121. An anthranilate-binding site is contributed by Gly81. Ser93 provides a ligand contact to Mg(2+). Asn112 provides a ligand contact to anthranilate. Residue Arg167 coordinates anthranilate. Mg(2+) is bound by residues Asp226 and Glu227.

Belongs to the anthranilate phosphoribosyltransferase family. As to quaternary structure, homodimer. Requires Mg(2+) as cofactor.

It carries out the reaction N-(5-phospho-beta-D-ribosyl)anthranilate + diphosphate = 5-phospho-alpha-D-ribose 1-diphosphate + anthranilate. It participates in amino-acid biosynthesis; L-tryptophan biosynthesis; L-tryptophan from chorismate: step 2/5. Functionally, catalyzes the transfer of the phosphoribosyl group of 5-phosphorylribose-1-pyrophosphate (PRPP) to anthranilate to yield N-(5'-phosphoribosyl)-anthranilate (PRA). This Rhodopseudomonas palustris (strain TIE-1) protein is Anthranilate phosphoribosyltransferase.